We begin with the raw amino-acid sequence, 431 residues long: D-inositol 3-phosphate glycosyltransferase (431 aa).

Position 21 (histidine 21) interacts with 1D-myo-inositol 3-phosphate. Residues 27–28 (QP) and glycine 35 each bind UDP-N-acetyl-alpha-D-glucosamine. 1D-myo-inositol 3-phosphate-binding positions include 32–37 (DAGGMN), arginine 90, tyrosine 123, threonine 147, and arginine 167. UDP-N-acetyl-alpha-D-glucosamine contacts are provided by arginine 241, lysine 246, and glutamine 307. Mg(2+) contacts are provided by tyrosine 316, arginine 317, and alanine 319. Positions 329 and 337 each coordinate UDP-N-acetyl-alpha-D-glucosamine. Position 343 (threonine 343) interacts with Mg(2+).

The protein belongs to the glycosyltransferase group 1 family. MshA subfamily. In terms of assembly, homodimer.

It carries out the reaction 1D-myo-inositol 3-phosphate + UDP-N-acetyl-alpha-D-glucosamine = 1D-myo-inositol 2-acetamido-2-deoxy-alpha-D-glucopyranoside 3-phosphate + UDP + H(+). Catalyzes the transfer of a N-acetyl-glucosamine moiety to 1D-myo-inositol 3-phosphate to produce 1D-myo-inositol 2-acetamido-2-deoxy-glucopyranoside 3-phosphate in the mycothiol biosynthesis pathway. The protein is D-inositol 3-phosphate glycosyltransferase of Saccharomonospora viridis (strain ATCC 15386 / DSM 43017 / JCM 3036 / CCUG 5913 / NBRC 12207 / NCIMB 9602 / P101) (Thermoactinomyces viridis).